The sequence spans 396 residues: Imidazolonepropionase (396 aa).

Fe(3+) contacts are provided by His69 and His71. Zn(2+)-binding residues include His69 and His71. Arg78, Tyr136, and His163 together coordinate 4-imidazolone-5-propanoate. Tyr136 contacts N-formimidoyl-L-glutamate. His224 is a Fe(3+) binding site. His224 contacts Zn(2+). Residue Gln227 participates in 4-imidazolone-5-propanoate binding. Asp298 provides a ligand contact to Fe(3+). Position 298 (Asp298) interacts with Zn(2+). Positions 300 and 302 each coordinate N-formimidoyl-L-glutamate. Thr303 is a binding site for 4-imidazolone-5-propanoate.

The protein belongs to the metallo-dependent hydrolases superfamily. HutI family. Requires Zn(2+) as cofactor. It depends on Fe(3+) as a cofactor.

The protein resides in the cytoplasm. The enzyme catalyses 4-imidazolone-5-propanoate + H2O = N-formimidoyl-L-glutamate. It functions in the pathway amino-acid degradation; L-histidine degradation into L-glutamate; N-formimidoyl-L-glutamate from L-histidine: step 3/3. In terms of biological role, catalyzes the hydrolytic cleavage of the carbon-nitrogen bond in imidazolone-5-propanoate to yield N-formimidoyl-L-glutamate. It is the third step in the universal histidine degradation pathway. The protein is Imidazolonepropionase of Cutibacterium acnes (strain DSM 16379 / KPA171202) (Propionibacterium acnes).